The primary structure comprises 177 residues: Large ribosomal subunit protein uL6 (177 aa).

N6-acetyllysine is present on lysine 44.

It belongs to the universal ribosomal protein uL6 family. As to quaternary structure, part of the 50S ribosomal subunit.

Its function is as follows. This protein binds to the 23S rRNA, and is important in its secondary structure. It is located near the subunit interface in the base of the L7/L12 stalk, and near the tRNA binding site of the peptidyltransferase center. In Shigella sonnei (strain Ss046), this protein is Large ribosomal subunit protein uL6.